A 145-amino-acid polypeptide reads, in one-letter code: 3-hydroxyacyl-[acyl-carrier-protein] dehydratase FabZ (145 aa).

Residue H48 is part of the active site.

It belongs to the thioester dehydratase family. FabZ subfamily.

It localises to the cytoplasm. It carries out the reaction a (3R)-hydroxyacyl-[ACP] = a (2E)-enoyl-[ACP] + H2O. Functionally, involved in unsaturated fatty acids biosynthesis. Catalyzes the dehydration of short chain beta-hydroxyacyl-ACPs and long chain saturated and unsaturated beta-hydroxyacyl-ACPs. The chain is 3-hydroxyacyl-[acyl-carrier-protein] dehydratase FabZ from Marinomonas sp. (strain MWYL1).